We begin with the raw amino-acid sequence, 991 residues long: Mediator of RNA polymerase II transcription subunit 5 (991 aa).

It belongs to the Mediator complex subunit 5 family. As to quaternary structure, component of the Mediator complex.

Its subcellular location is the nucleus. In terms of biological role, component of the Mediator complex, a coactivator involved in the regulated transcription of nearly all RNA polymerase II-dependent genes. Mediator functions as a bridge to convey information from gene-specific regulatory proteins to the basal RNA polymerase II transcription machinery. Mediator is recruited to promoters by direct interactions with regulatory proteins and serves as a scaffold for the assembly of a functional preinitiation complex with RNA polymerase II and the general transcription factors. This Yarrowia lipolytica (strain CLIB 122 / E 150) (Yeast) protein is Mediator of RNA polymerase II transcription subunit 5 (NUT1).